Consider the following 235-residue polypeptide: 2-C-methyl-D-erythritol 4-phosphate cytidylyltransferase (235 aa).

This sequence belongs to the IspD/TarI cytidylyltransferase family. IspD subfamily.

The enzyme catalyses 2-C-methyl-D-erythritol 4-phosphate + CTP + H(+) = 4-CDP-2-C-methyl-D-erythritol + diphosphate. The protein operates within isoprenoid biosynthesis; isopentenyl diphosphate biosynthesis via DXP pathway; isopentenyl diphosphate from 1-deoxy-D-xylulose 5-phosphate: step 2/6. In terms of biological role, catalyzes the formation of 4-diphosphocytidyl-2-C-methyl-D-erythritol from CTP and 2-C-methyl-D-erythritol 4-phosphate (MEP). This is 2-C-methyl-D-erythritol 4-phosphate cytidylyltransferase from Pseudomonas entomophila (strain L48).